A 315-amino-acid chain; its full sequence is tRNA dimethylallyltransferase (315 aa).

14–21 is a binding site for ATP; it reads GPTASGKT. Residue 16–21 coordinates substrate; sequence TASGKT. Interaction with substrate tRNA stretches follow at residues 39–42, 163–167, and 248–253; these read DSAL, QRIQR, and RCVGYR.

Belongs to the IPP transferase family. In terms of assembly, monomer. Requires Mg(2+) as cofactor.

It catalyses the reaction adenosine(37) in tRNA + dimethylallyl diphosphate = N(6)-dimethylallyladenosine(37) in tRNA + diphosphate. In terms of biological role, catalyzes the transfer of a dimethylallyl group onto the adenine at position 37 in tRNAs that read codons beginning with uridine, leading to the formation of N6-(dimethylallyl)adenosine (i(6)A). The chain is tRNA dimethylallyltransferase from Paraburkholderia phytofirmans (strain DSM 17436 / LMG 22146 / PsJN) (Burkholderia phytofirmans).